Consider the following 418-residue polypeptide: Vacuole membrane protein HFL1 (418 aa).

Over 1–5 (MENKL) the chain is Extracellular. Residues 6–26 (LCWWLYWPCVYSSIIATIISF) form a helical membrane-spanning segment. Residues 27-43 (YTITRHLLNYRKPYEQR) lie on the Cytoplasmic side of the membrane. A helical transmembrane segment spans residues 44–64 (LSIRILLLVPIFSVSCASGII). Residues 65 to 78 (KPEAAQFYVDPIRE) are Extracellular-facing. The chain crosses the membrane as a helical span at residues 79-99 (FYEAFVIYTFFTFLTLLLGGE). Residues 100 to 141 (RNIITVLSLNHAPTRHPIPLIGKICKPIDLSDPFDFLFVKKG) lie on the Cytoplasmic side of the membrane. Residues 142–162 (ILQYVWFKPFYCFGTLICSAW) form a helical membrane-spanning segment. Over 163–168 (KLPKFE) the chain is Extracellular. Residues 169 to 189 (IFLNVFYNISVTWSLYSLALF) form a helical membrane-spanning segment. The Cytoplasmic portion of the chain corresponds to 190 to 205 (WKCLYPELTPYKPWLK). A helical transmembrane segment spans residues 206–226 (FLCVKLIIFASYWQSIIIQGL). Residues 227-246 (VVTGKLGTGNQDRTSGYVYK) are Extracellular-facing. A helical membrane pass occupies residues 247–267 (NGLLCIEMVPFAILHAVAFPW). At 268–418 (NKYTAFSIPY…DVQSRSSMAC (151 aa)) the chain is on the cytoplasmic side. An ATG8-interacting region region spans residues 379–402 (RTFPEDPNYPVVHDYTMGHRYSRS).

The protein belongs to the TMEM184 family. Interacts with ATG8.

It is found in the vacuole membrane. Functionally, vacuole membrane protein that recruits ATG8 to facilitate the degradation of vacuolar integral membrane proteins during early-stationary vacuole turnover (EVT) when cells enter stationary phase. This is Vacuole membrane protein HFL1 from Saccharomyces cerevisiae (strain ATCC 204508 / S288c) (Baker's yeast).